The primary structure comprises 148 residues: ATP synthase epsilon chain (148 aa).

It belongs to the ATPase epsilon chain family. As to quaternary structure, F-type ATPases have 2 components, CF(1) - the catalytic core - and CF(0) - the membrane proton channel. CF(1) has five subunits: alpha(3), beta(3), gamma(1), delta(1), epsilon(1). CF(0) has three main subunits: a, b and c.

The protein localises to the cell inner membrane. Its function is as follows. Produces ATP from ADP in the presence of a proton gradient across the membrane. The polypeptide is ATP synthase epsilon chain (Paracoccus denitrificans (strain Pd 1222)).